The sequence spans 369 residues: Endophilin-A (369 aa).

A BAR domain is found at 18-248 (TEKMGGAEGT…LQEKRSEAES (231 aa)). Residues 227–247 (QCADVLRGLQETLQEKRSEAE) adopt a coiled-coil conformation. Low complexity predominate over residues 275–294 (GTPSHISSSASPLPSPMRSP). The tract at residues 275-296 (GTPSHISSSASPLPSPMRSPAK) is disordered. One can recognise an SH3 domain in the interval 305 to 364 (QQQPCCQALYDFDPENPGELGFKENDIITLLNRVDDNWYEGAVNGRTGYFPQSYVQVQVP).

Belongs to the endophilin family.

It is found in the cytoplasm. It localises to the membrane. In terms of biological role, required presynaptically at the neuromuscular junction. Implicated in synaptic vesicle endocytosis. The polypeptide is Endophilin-A (Drosophila pseudoobscura pseudoobscura (Fruit fly)).